Reading from the N-terminus, the 519-residue chain is MADTEEAYGMPDTPVEAEPKELQCEPKQDNQLGASSKTPTSPPAAFTQQGMEGIKVFLHERELWLKFHEVGTEMIITKAGRRMFPSYKVKVTGLNPKTKYILLMDIVPADDHRYKFADNKWSVTGKAEPAMPGRLYVHPDSPATGAHWMRQLVSFQKLKLTNNHLDPFGHIILNSMHKYQPRLHIVKADENNGFGSKNTAFCTHVFSETDFIAVTSYQNHKITQLKIENNPFAKGFRGSDDMELHRMSRMQSKEYPVVPRSTVRQKVSSNHSPFSQETRNITGSSTLNSQYQCENGVSSTSQDLLPSSSAYTSLPHESGTIYHCTKRKVSEEPAEHSYKKPYMDTSPSEEDPFYRSGYPQPSSSSSSTTSFRTESAQRQACMYASSAPATEPVPSIEDISCNSWSSVPSYSSCTVGGGMQPMERLPYQHFSAHFTSSSLMPRLSNHAGTQPSDSHSMFQHQSSHQAIVRQCNPQSGLQQSSALQPTEFLYPHSVPRTISPHQYHSVHGVGMVPDWNENS.

The interval 1-46 (MADTEEAYGMPDTPVEAEPKELQCEPKQDNQLGASSKTPTSPPAAF) is disordered. Positions 17–28 (AEPKELQCEPKQ) are enriched in basic and acidic residues. Positions 29–39 (DNQLGASSKTP) are enriched in polar residues. Positions 63-238 (LWLKFHEVGT…NNPFAKGFRG (176 aa)) form a DNA-binding region, T-box. 3 disordered regions span residues 254 to 282 (EYPVVPRSTVRQKVSSNHSPFSQETRNIT), 293 to 312 (CENGVSSTSQDLLPSSSAYT), and 326 to 372 (KRKV…TSFR). The segment covering 262 to 282 (TVRQKVSSNHSPFSQETRNIT) has biased composition (polar residues). Low complexity predominate over residues 298–309 (SSTSQDLLPSSS). The segment covering 328-342 (KVSEEPAEHSYKKPY) has biased composition (basic and acidic residues).

Monomer. Homodimer (via the T-box); binds DNA as homodimer.

Its subcellular location is the nucleus. The protein resides in the cytoplasm. Functionally, DNA-binding protein that regulates the transcription of several genes and is involved in heart development and limb pattern formation. May bind to the core DNA motif of promoters. The protein is T-box transcription factor TBX5 (tbx5) of Xenopus laevis (African clawed frog).